The chain runs to 407 residues: Probable endo-beta-1,4-glucanase celB (407 aa).

The first 18 residues, 1–18, serve as a signal peptide directing secretion; that stretch reads MALTLAATALVLLPLVTA. N-linked (GlcNAc...) asparagine glycosylation occurs at Asn136. The Nucleophile role is filled by Glu216. Catalysis depends on Glu221, which acts as the Proton donor.

This sequence belongs to the glycosyl hydrolase 7 (cellulase C) family.

It localises to the secreted. The enzyme catalyses Endohydrolysis of (1-&gt;4)-beta-D-glucosidic linkages in cellulose, lichenin and cereal beta-D-glucans.. Its function is as follows. Has endoglucanase activity on substrates containing beta-1,4 glycosidic bonds, like in carboxymethylcellulose (CMC), hydroxyethylcellulose (HEC) and beta-glucan. Involved in the degradation of complex natural cellulosic substrates. The protein is Probable endo-beta-1,4-glucanase celB (celB) of Neosartorya fischeri (strain ATCC 1020 / DSM 3700 / CBS 544.65 / FGSC A1164 / JCM 1740 / NRRL 181 / WB 181) (Aspergillus fischerianus).